The chain runs to 243 residues: Small ribosomal subunit protein uS3 (243 aa).

Residue A2 is modified to N-acetylalanine. A phosphoserine mark is found at S6 and S35. A KH type-2 domain is found at 21–92 (LNEFLTRELA…SVELYAEKVA (72 aa)). T42 carries the post-translational modification Phosphothreonine. K62 is modified (N6-acetyllysine). Residues R64, R65, and R67 each carry the asymmetric dimethylarginine modification. Residue T70 is modified to Phosphothreonine. Residue K90 forms a Glycyl lysine isopeptide (Lys-Gly) (interchain with G-Cter in ubiquitin) linkage. S104 is modified (phosphoserine). K132 is modified (N6-succinyllysine). The segment at 200–243 (PKKPLPDHVSIVEPKDEILPTTPISEQKGGKPEPPAMPQPVPTA) is disordered. A Glycyl lysine isopeptide (Lys-Gly) (interchain with G-Cter in ubiquitin) cross-link involves residue K202. S209 is subject to Phosphoserine. Residue K214 forms a Glycyl lysine isopeptide (Lys-Gly) (interchain with G-Cter in SUMO2); alternate linkage. A Glycyl lysine isopeptide (Lys-Gly) (interchain with G-Cter in ubiquitin); alternate cross-link involves residue K214. T220 and T221 each carry phosphothreonine. S224 carries the phosphoserine modification. K230 is covalently cross-linked (Glycyl lysine isopeptide (Lys-Gly) (interchain with G-Cter in SUMO2)). A compositionally biased stretch (pro residues) spans 231–243 (PEPPAMPQPVPTA). Position 242 is a phosphothreonine (T242).

The protein belongs to the universal ribosomal protein uS3 family. As to quaternary structure, component of the 40S small ribosomal subunit. Identified in a IGF2BP1-dependent mRNP granule complex containing untranslated mRNAs. Interacts with HNRPD. Interacts with PRMT1; the interaction methylates RPS3. Interacts with SUMO1; the interaction sumoylates RPS3. Interacts with UBC9. Interacts with CDK1; the interaction phosphorylates RPS3. Interacts with PRKCD; the interaction phosphorylates RPS3. Interacts with PKB/AKT; the interaction phosphorylates RPS3. Interacts with E2F1; the interaction occurs in the absence of nerve growth factor and increases transcription of pro-apoptotic proteins BCL2L11/BIM and HRK/Dp5. Interacts with the base excision repair proteins APEX1 and OGG1; interaction with OGG1 increases OGG1 N-glycosylase activity. Interacts with UNG; the interaction increases the uracil excision activity of UNG1. Interacts with HSP90; the interaction prevents the ubiquitination and proteasome-dependent degradation of RPS3 and is suppressed by increased ROS levels. Interacts with TOM70; the interaction promotes translocation of RPS3 to the mitochondrion. Interacts (via N-terminus) with RELA (via N-terminus); the interaction enhances the DNA-binding activity of the NF-kappa-B p65-p50 complex. Interacts with NFKBIA; the interaction is direct and may bridge the interaction between RPS3 and RELA. Interacts with IKKB; the interaction phosphorylates RPS3 and enhances its translocation to the nucleus. Interacts (via KH domain) with MDM2 and TP53. Interacts with TRADD. Interacts with ASCC3. Identified in a HCV IRES-mediated translation complex, at least composed of EIF3C, IGF2BP1, RPS3 and HCV RNA-replicon. Interacts with CRY1. Methylation by PRMT1 is required for import into the nucleolus and for ribosome assembly. Post-translationally, sumoylation by SUMO1 enhances protein stability through increased resistance to proteolysis. Sumoylation occurs at one or more of the three consensus sites, Lys-18, Lys-214 and Lys-230. In terms of processing, phosphorylation at Thr-221 by CDK1 occurs mainly in G2/M phase. Phosphorylation by PRKCD occurs on a non-ribosomal-associated form which results in translocation of RPS3 to the nucleus and enhances its endonuclease activity. Phosphorylated on Ser-209 by IKKB in response to activation of the NF-kappa-B p65-p50 complex which enhances the association of RPS3 with importin-alpha and mediates the nuclear translocation of RPS3. Phosphorylation by MAPK is required for translocation to the nucleus following exposure of cells to DNA damaging agents such as hydrogen peroxide. Phosphorylation by PKB/AKT mediates RPS3 nuclear translocation, enhances RPS3 endonuclease activity and suppresses RPS3-induced neuronal apoptosis. Ubiquitinated; ubiquitination is prevented by interaction with HSP90 which stabilizes the protein. Monoubiquitinated at Lys-214 by RNF10 and ZNF598 when a ribosome has stalled during translation of poly(A) sequences, leading to preclude synthesis of a long poly-lysine tail and initiate the ribosome quality control (RQC) pathway to degrade the potentially detrimental aberrant nascent polypeptide. Deubiquitinated at Lys-214 by USP10, preventing degradation by the proteasome and promoting 40S ribosome subunit recycling following ribosome dissociation. Post-translationally, ufmylated by UFL1.

The protein resides in the cytoplasm. It localises to the nucleus. The protein localises to the nucleolus. It is found in the mitochondrion inner membrane. Its subcellular location is the cytoskeleton. The protein resides in the spindle. It catalyses the reaction 2'-deoxyribonucleotide-(2'-deoxyribose 5'-phosphate)-2'-deoxyribonucleotide-DNA = a 3'-end 2'-deoxyribonucleotide-(2,3-dehydro-2,3-deoxyribose 5'-phosphate)-DNA + a 5'-end 5'-phospho-2'-deoxyribonucleoside-DNA + H(+). Endonuclease activity is inhibited by MgCl2 on apurinic/apyrimidinic DNA but not on UV-irradiated DNA. Component of the small ribosomal subunit. The ribosome is a large ribonucleoprotein complex responsible for the synthesis of proteins in the cell. Has endonuclease activity and plays a role in repair of damaged DNA. Cleaves phosphodiester bonds of DNAs containing altered bases with broad specificity and cleaves supercoiled DNA more efficiently than relaxed DNA. Displays high binding affinity for 7,8-dihydro-8-oxoguanine (8-oxoG), a common DNA lesion caused by reactive oxygen species (ROS). Has also been shown to bind with similar affinity to intact and damaged DNA. Stimulates the N-glycosylase activity of the base excision protein OGG1. Enhances the uracil excision activity of UNG1. Also stimulates the cleavage of the phosphodiester backbone by APEX1. When located in the mitochondrion, reduces cellular ROS levels and mitochondrial DNA damage. Has also been shown to negatively regulate DNA repair in cells exposed to hydrogen peroxide. Plays a role in regulating transcription as part of the NF-kappa-B p65-p50 complex where it binds to the RELA/p65 subunit, enhances binding of the complex to DNA and promotes transcription of target genes. Represses its own translation by binding to its cognate mRNA. Binds to and protects TP53/p53 from MDM2-mediated ubiquitination. Involved in spindle formation and chromosome movement during mitosis by regulating microtubule polymerization. Involved in induction of apoptosis through its role in activation of CASP8. Induces neuronal apoptosis by interacting with the E2F1 transcription factor and acting synergistically with it to up-regulate pro-apoptotic proteins BCL2L11/BIM and HRK/Dp5. Interacts with TRADD following exposure to UV radiation and induces apoptosis by caspase-dependent JNK activation. This Oryctolagus cuniculus (Rabbit) protein is Small ribosomal subunit protein uS3 (RPS3).